Consider the following 198-residue polypeptide: Holliday junction resolvase RecU (198 aa).

The tract at residues 1–21 (MVNYPHKLSSQKRQPSLSQPK) is disordered. Polar residues predominate over residues 11 to 21 (QKRQPSLSQPK). Thr-81, Asp-83, Glu-96, and Gln-115 together coordinate Mg(2+).

The protein belongs to the RecU family. Mg(2+) serves as cofactor.

Its subcellular location is the cytoplasm. It carries out the reaction Endonucleolytic cleavage at a junction such as a reciprocal single-stranded crossover between two homologous DNA duplexes (Holliday junction).. Endonuclease that resolves Holliday junction intermediates in genetic recombination. Cleaves mobile four-strand junctions by introducing symmetrical nicks in paired strands. Promotes annealing of linear ssDNA with homologous dsDNA. Required for DNA repair, homologous recombination and chromosome segregation. This Streptococcus pneumoniae (strain ATCC 700669 / Spain 23F-1) protein is Holliday junction resolvase RecU.